A 425-amino-acid polypeptide reads, in one-letter code: UDP-N-acetylglucosamine 1-carboxyvinyltransferase (425 aa).

31-32 (KN) lines the phosphoenolpyruvate pocket. Residue Arg100 participates in UDP-N-acetyl-alpha-D-glucosamine binding. The Proton donor role is filled by Cys124. Cys124 is modified (2-(S-cysteinyl)pyruvic acid O-phosphothioketal). UDP-N-acetyl-alpha-D-glucosamine-binding positions include 129-133 (RPIDQ), 170-172 (TVT), Asp311, and Ile333.

It belongs to the EPSP synthase family. MurA subfamily.

The protein resides in the cytoplasm. The enzyme catalyses phosphoenolpyruvate + UDP-N-acetyl-alpha-D-glucosamine = UDP-N-acetyl-3-O-(1-carboxyvinyl)-alpha-D-glucosamine + phosphate. It functions in the pathway cell wall biogenesis; peptidoglycan biosynthesis. Cell wall formation. Adds enolpyruvyl to UDP-N-acetylglucosamine. This is UDP-N-acetylglucosamine 1-carboxyvinyltransferase from Aquifex aeolicus (strain VF5).